The sequence spans 220 residues: MTKGILGRKIGMTQVFGENGELIPVTVVEASQNVVLQKKTEEVDGYNAIQVGFEDKQAYKKGSKSNKYANKPAEGHAKKADTAPKRFIREFRNLNVDEYEVGQEVSVDTFETGDIIDVTGVSKGKGFQGAIKRHGQGRGPMAHGSHFHRAPGSVGMASDASKVFKGQKMPGRMGGNTVTVQNLEVVQVDTENSVILVKGNVPGPKKGLVEITTSIKKGNK.

Residues 61-81 are disordered; the sequence is KGSKSNKYANKPAEGHAKKAD.

Belongs to the universal ribosomal protein uL3 family. Part of the 50S ribosomal subunit. Forms a cluster with proteins L14 and L19.

Its function is as follows. One of the primary rRNA binding proteins, it binds directly near the 3'-end of the 23S rRNA, where it nucleates assembly of the 50S subunit. The protein is Large ribosomal subunit protein uL3 of Staphylococcus epidermidis (strain ATCC 35984 / DSM 28319 / BCRC 17069 / CCUG 31568 / BM 3577 / RP62A).